The following is a 348-amino-acid chain: Dihydroorotase (348 aa).

Zn(2+) is bound by residues His-17 and His-19. Substrate-binding positions include 19 to 21 (HLR) and Asn-45. Lys-103, His-140, and His-178 together coordinate Zn(2+). An N6-carboxylysine modification is found at Lys-103. His-140 is a substrate binding site. Position 223 (Leu-223) interacts with substrate. A Zn(2+)-binding site is contributed by Asp-251. Residue Asp-251 is part of the active site. Residues His-255 and Ala-267 each contribute to the substrate site.

It belongs to the metallo-dependent hydrolases superfamily. DHOase family. Class II DHOase subfamily. As to quaternary structure, homodimer. Requires Zn(2+) as cofactor. The cofactor is Co(2+). Mg(2+) is required as a cofactor. It depends on Ni(2+) as a cofactor.

It carries out the reaction (S)-dihydroorotate + H2O = N-carbamoyl-L-aspartate + H(+). Its pathway is pyrimidine metabolism; UMP biosynthesis via de novo pathway; (S)-dihydroorotate from bicarbonate: step 3/3. Its function is as follows. Catalyzes the reversible cyclization of carbamoyl aspartate to dihydroorotate. This chain is Dihydroorotase, found in Klebsiella pneumoniae subsp. pneumoniae (strain ATCC 700721 / MGH 78578).